A 346-amino-acid polypeptide reads, in one-letter code: UDP-N-acetylenolpyruvoylglucosamine reductase (346 aa).

Residues leucine 18–histidine 189 form the FAD-binding PCMH-type domain. Residue arginine 165 is part of the active site. Serine 240 serves as the catalytic Proton donor. Residue glutamate 336 is part of the active site.

It belongs to the MurB family. It depends on FAD as a cofactor.

Its subcellular location is the cytoplasm. The catalysed reaction is UDP-N-acetyl-alpha-D-muramate + NADP(+) = UDP-N-acetyl-3-O-(1-carboxyvinyl)-alpha-D-glucosamine + NADPH + H(+). The protein operates within cell wall biogenesis; peptidoglycan biosynthesis. Functionally, cell wall formation. The chain is UDP-N-acetylenolpyruvoylglucosamine reductase from Neisseria meningitidis serogroup A / serotype 4A (strain DSM 15465 / Z2491).